We begin with the raw amino-acid sequence, 371 residues long: UDP-N-acetylglucosamine--N-acetylmuramyl-(pentapeptide) pyrophosphoryl-undecaprenol N-acetylglucosamine transferase (371 aa).

UDP-N-acetyl-alpha-D-glucosamine-binding positions include 15 to 17, Asn-126, Arg-172, Ser-199, Ile-256, 275 to 280, and Gln-301; these read TGG and ALTVSE.

This sequence belongs to the glycosyltransferase 28 family. MurG subfamily.

Its subcellular location is the cell inner membrane. It carries out the reaction di-trans,octa-cis-undecaprenyl diphospho-N-acetyl-alpha-D-muramoyl-L-alanyl-D-glutamyl-meso-2,6-diaminopimeloyl-D-alanyl-D-alanine + UDP-N-acetyl-alpha-D-glucosamine = di-trans,octa-cis-undecaprenyl diphospho-[N-acetyl-alpha-D-glucosaminyl-(1-&gt;4)]-N-acetyl-alpha-D-muramoyl-L-alanyl-D-glutamyl-meso-2,6-diaminopimeloyl-D-alanyl-D-alanine + UDP + H(+). The protein operates within cell wall biogenesis; peptidoglycan biosynthesis. In terms of biological role, cell wall formation. Catalyzes the transfer of a GlcNAc subunit on undecaprenyl-pyrophosphoryl-MurNAc-pentapeptide (lipid intermediate I) to form undecaprenyl-pyrophosphoryl-MurNAc-(pentapeptide)GlcNAc (lipid intermediate II). The polypeptide is UDP-N-acetylglucosamine--N-acetylmuramyl-(pentapeptide) pyrophosphoryl-undecaprenol N-acetylglucosamine transferase (Francisella tularensis subsp. holarctica (strain FTNF002-00 / FTA)).